A 464-amino-acid polypeptide reads, in one-letter code: 2-oxoadipate dioxygenase/decarboxylase (464 aa).

2-oxoadipate-binding residues include H70, R74, and H226. H70 is a binding site for Fe(2+). H226 and E294 together coordinate Fe(2+). V402 serves as a coordination point for 2-oxoadipate.

Belongs to the 2-oxoadipate dioxygenase/decarboxylase family. Requires Fe(2+) as cofactor.

It catalyses the reaction 2-oxoadipate + O2 = (R)-2-hydroxyglutarate + CO2. It participates in amino-acid degradation. Inhibited by EDTA. In terms of biological role, catalyzes the decarboxylation and hydroxylation of 2-oxoadipate (2OA) to form D-2-hydroxyglutarate (D-2-HGA). Is specific for 2-oxoadipate. Is involved in a D-lysine catabolic pathway. The polypeptide is 2-oxoadipate dioxygenase/decarboxylase (Pseudomonas putida (strain ATCC 47054 / DSM 6125 / CFBP 8728 / NCIMB 11950 / KT2440)).